The chain runs to 213 residues: Histone H1 (213 aa).

The span at Met-1–Pro-25 shows a compositional bias: low complexity. Disordered stretches follow at residues Met-1 to Tyr-30 and Gly-81 to Ser-213. Positions Glu-26 to Lys-97 constitute an H15 domain. Low complexity-rich tracts occupy residues Ala-102–Ala-113, Lys-123–Ala-137, Lys-157–Lys-176, and Pro-203–Ser-213.

It belongs to the histone H1/H5 family.

Its subcellular location is the nucleus. The protein resides in the chromosome. In terms of biological role, could act as an H1-type linker histone. The sequence is that of Histone H1 from Ascobolus immersus.